Here is a 283-residue protein sequence, read N- to C-terminus: (+)-O-methylkolavelool synthase (283 aa).

S-adenosyl-L-methionine contacts are provided by residues Q106, 129-130 (NA), and H151.

The protein belongs to the methyltransferase superfamily.

The enzyme catalyses (+)-kolavelool + S-adenosyl-L-methionine = (+)-O-methylkolavelool + S-adenosyl-L-homocysteine + H(+). Involved in the biosynthesis of the diterpene (+)-O-methylkolavelool. Catalyzes the transfer of a methyl group from S-adenosyl-L-methionine to the hydroxy group of (+)-kolavelool, forming (+)-O-methylkolavelool. The protein is (+)-O-methylkolavelool synthase of Herpetosiphon aurantiacus (strain ATCC 23779 / DSM 785 / 114-95).